Reading from the N-terminus, the 180-residue chain is MAKNIKDIANQYAKAIFELAGEQDNVDEVLTDLRTIKTVLDENQNFITIASSADVAIASRDDLLKTLTGNSTDSVKNLVKLLQVNNRLNILSIVVDEFVSQYNEVNGIVDVQATTAVALDDGRLDKLASVFASKTGAQQVNIENVVDESILGGVILQSQSTLIDGSLQTKIAKMKAQLLG.

Belongs to the ATPase delta chain family. As to quaternary structure, F-type ATPases have 2 components, F(1) - the catalytic core - and F(0) - the membrane proton channel. F(1) has five subunits: alpha(3), beta(3), gamma(1), delta(1), epsilon(1). F(0) has three main subunits: a(1), b(2) and c(10-14). The alpha and beta chains form an alternating ring which encloses part of the gamma chain. F(1) is attached to F(0) by a central stalk formed by the gamma and epsilon chains, while a peripheral stalk is formed by the delta and b chains.

Its subcellular location is the cell membrane. In terms of biological role, f(1)F(0) ATP synthase produces ATP from ADP in the presence of a proton or sodium gradient. F-type ATPases consist of two structural domains, F(1) containing the extramembraneous catalytic core and F(0) containing the membrane proton channel, linked together by a central stalk and a peripheral stalk. During catalysis, ATP synthesis in the catalytic domain of F(1) is coupled via a rotary mechanism of the central stalk subunits to proton translocation. This protein is part of the stalk that links CF(0) to CF(1). It either transmits conformational changes from CF(0) to CF(1) or is implicated in proton conduction. The polypeptide is ATP synthase subunit delta (Leuconostoc mesenteroides subsp. mesenteroides (strain ATCC 8293 / DSM 20343 / BCRC 11652 / CCM 1803 / JCM 6124 / NCDO 523 / NBRC 100496 / NCIMB 8023 / NCTC 12954 / NRRL B-1118 / 37Y)).